The primary structure comprises 362 residues: MIIDRVEVETINSFSKLELFKEIYGLIWILPIFALLLGITIEVLVIVWLEREISASIQQRIGPEYAGPLGLLQAIADGTKLLLKEDILPSRGDIPLFSIGPSIAVISILLSFLVIPLGYRFVLADLSIGVFLWIAISSIAPIGLLMAGYSSNNKYSFLGGLRAAAQSISYEIPLTFCVLAISLLSNSLSTVDIVEAQSKYGFFGWNLWRQPIGFLVFLISSLAECERLPFDLPEAEEELVAGYQTEYSGIKYGLFYLVSYLNLLVSSLFVTVLYLGGWNFSIPYISFFGFFQMNKIIGILEMVIGIFITLTKAYLFLFISITIRWTLPRMRMDQLLNLGWKFLLPISLGNLLLTTSFQLVSL.

7 helical membrane passes run 26–48, 97–119, 126–148, 163–185, 254–276, 296–318, and 338–360; these read LIWILPIFALLLGITIEVLVIVW, FSIGPSIAVISILLSFLVIPLGY, LSIGVFLWIAISSIAPIGLLMAG, AAAQSISYEIPLTFCVLAISLLS, LFYLVSYLNLLVSSLFVTVLYLG, IIGILEMVIGIFITLTKAYLFLF, and LGWKFLLPISLGNLLLTTSFQLV.

Belongs to the complex I subunit 1 family. As to quaternary structure, NDH is composed of at least 16 different subunits, 5 of which are encoded in the nucleus.

It localises to the plastid. The protein localises to the chloroplast thylakoid membrane. The enzyme catalyses a plastoquinone + NADH + (n+1) H(+)(in) = a plastoquinol + NAD(+) + n H(+)(out). The catalysed reaction is a plastoquinone + NADPH + (n+1) H(+)(in) = a plastoquinol + NADP(+) + n H(+)(out). In terms of biological role, NDH shuttles electrons from NAD(P)H:plastoquinone, via FMN and iron-sulfur (Fe-S) centers, to quinones in the photosynthetic chain and possibly in a chloroplast respiratory chain. The immediate electron acceptor for the enzyme in this species is believed to be plastoquinone. Couples the redox reaction to proton translocation, and thus conserves the redox energy in a proton gradient. The chain is NAD(P)H-quinone oxidoreductase subunit 1, chloroplastic (ndhA) from Zea mays (Maize).